The chain runs to 150 residues: D-aminoacyl-tRNA deacylase (150 aa).

Positions 136-137 (GP) match the Gly-cisPro motif, important for rejection of L-amino acids motif.

It belongs to the DTD family. In terms of assembly, homodimer.

The protein localises to the cytoplasm. It catalyses the reaction glycyl-tRNA(Ala) + H2O = tRNA(Ala) + glycine + H(+). It carries out the reaction a D-aminoacyl-tRNA + H2O = a tRNA + a D-alpha-amino acid + H(+). Its function is as follows. An aminoacyl-tRNA editing enzyme that deacylates mischarged D-aminoacyl-tRNAs. Also deacylates mischarged glycyl-tRNA(Ala), protecting cells against glycine mischarging by AlaRS. Acts via tRNA-based rather than protein-based catalysis; rejects L-amino acids rather than detecting D-amino acids in the active site. By recycling D-aminoacyl-tRNA to D-amino acids and free tRNA molecules, this enzyme counteracts the toxicity associated with the formation of D-aminoacyl-tRNA entities in vivo and helps enforce protein L-homochirality. The polypeptide is D-aminoacyl-tRNA deacylase (Staphylococcus aureus (strain MRSA252)).